The sequence spans 135 residues: Regulator of ribonuclease activity B (135 aa).

Residues 114 to 135 form a disordered region; the sequence is WGTYFESDEDDEEDESEDKPEA. Acidic residues predominate over residues 119–135; the sequence is ESDEDDEEDESEDKPEA.

This sequence belongs to the RraB family. Interacts with the C-terminal region of Rne.

The protein resides in the cytoplasm. Globally modulates RNA abundance by binding to RNase E (Rne) and regulating its endonucleolytic activity. Can modulate Rne action in a substrate-dependent manner by altering the composition of the degradosome. The protein is Regulator of ribonuclease activity B of Photobacterium profundum (strain SS9).